The following is a 66-amino-acid chain: Beta-toxin Cbo4 (66 aa).

The LCN-type CS-alpha/beta domain maps to Lys1–Lys66. Cystine bridges form between Cys12-Cys65, Cys16-Cys41, Cys25-Cys46, and Cys29-Cys48. At Lys66 the chain carries Lysine amide.

This sequence belongs to the long (4 C-C) scorpion toxin superfamily. Sodium channel inhibitor family. Beta subfamily. As to expression, expressed by the venom gland.

The protein resides in the secreted. Functionally, beta toxins bind voltage-independently at site-4 of sodium channels and shift the voltage of activation toward more negative potentials thereby affecting sodium channel activation and promoting spontaneous and repetitive firing. Is active on the human voltage-gated sodium channels Nav1.4/SCN4A, Nav1.5/SCN5A and Nav1.6/SCN8A when tested at 200 nM. In vivo, is toxic to mice when intraperitoneally injected. The chain is Beta-toxin Cbo4 from Centruroides bonito (Scorpion).